Reading from the N-terminus, the 603-residue chain is Nuclear receptor subfamily 2 group C member 1 (603 aa).

Residues 1–178 (MATIEEIAHQ…RLQRCIAFGM (178 aa)) form a required for interaction with KAT2B region. The nuclear receptor DNA-binding region spans 110–185 (FDLCVVCGDK…FGMKQDSVQC (76 aa)). 2 NR C4-type zinc fingers span residues 113-133 (CVVC…CEGC) and 149-173 (CRGS…LQRC). 2 positions are modified to phosphoserine: serine 197 and serine 215. Threonine 220 carries the phosphothreonine modification. Threonine 222 is subject to Phosphothreonine; by MAPK1. Residue lysine 250 forms a Glycyl lysine isopeptide (Lys-Gly) (interchain with G-Cter in SUMO2) linkage. Residues 348–590 (GSVHLITGDS…SVIPHILKME (243 aa)) enclose the NR LBD domain. The residue at position 581 (serine 581) is a Phosphoserine; by PKC. A required for interaction with NRIP1 region spans residues 584–603 (PHILKMEPADYNSQIIGHSI). Lysine 588 is covalently cross-linked (Glycyl lysine isopeptide (Lys-Gly) (interchain with G-Cter in SUMO2)).

This sequence belongs to the nuclear hormone receptor family. NR2 subfamily. Homodimer. Heterodimer; binds DNA as a heterodimer with NR2C2 required for chromatin remodeling and for binding to promoter regions such as globin DR1 repeats. Interacts with NRIP1 (via its LXXLL motifs); the interaction provides corepressor activity. Interacts with HDAC3 (via the DNA-binding domain). Interacts with HDAC4 (via the DNA-binding domain). Interacts with PIAS1; the interaction is required for sumoylation of NR2C1. Interacts with UBE2I; the interaction is required for sumoylation of NR2C1. Interacts with KAT2B; the interaction acts as a corepressor of gene expression. Interacts with ESR1; the interaction prevents homodimerization of ESR1 and suppresses its transcriptional activity and cell growth. Sumoylation requires both PIAS1 and UBE2I. Sumoylation appears to dissociate NR2C1 from the PML nuclear bodies. Enhances the interaction with NRIP1 but inhibits interaction with KAT2B. In proliferating cells, stimulation by all-trans retinoic acid, activation of MAPK1-mediated phosphorylation and recruitment to PML bodies with subsequent sumoylation, suppresses OCT4 expression. In terms of processing, phosphorylated on several serine and threonine residues. Phosphorylation on Thr-222, stimulated by all-trans retinoic acid (atRA) mediates PML location and sumoylation in proliferating cells which then modulates its association with effector molecules, KAT2B and NRIP1. Phosphorylation on Ser-581 by PKC is important for protein stability and function as activator of RARB.

The protein localises to the nucleus. It localises to the PML body. Functionally, orphan nuclear receptor. Binds the IR7 element in the promoter of its own gene in an autoregulatory negative feedback mechanism. Primarily repressor of a broad range of genes. Binds to hormone response elements (HREs) consisting of two 5'-AGGTCA-3' half site direct repeat consensus sequences. Together with NR2C2, forms the core of the DRED (direct repeat erythroid-definitive) complex that represses embryonic and fetal globin transcription. Also activator of OCT4 gene expression. May be involved in stem cell proliferation and differentiation. Mediator of retinoic acid-regulated preadipocyte proliferation. The sequence is that of Nuclear receptor subfamily 2 group C member 1 (NR2C1) from Homo sapiens (Human).